The chain runs to 166 residues: UPF0336 protein ML1908 (166 aa).

The protein belongs to the UPF0336 family.

The sequence is that of UPF0336 protein ML1908 from Mycobacterium leprae (strain TN).